We begin with the raw amino-acid sequence, 275 residues long: MANFTAADVKRLRELTGAGMLDCKNALAESDGDFDKAVEALRIKGAKDVGKRAERATAEGLVAAQGGALIELNSETDFVAKNAEFQALADQIVAAAASSKAADVDALKAAKIGDTTVEQAIAELSAKIGEKLELRRVAHFDGTVEAYLHRRAADLPPAVGVLVEYQGSGKDSDKEAAHAVALQIAALKARYLSRGDVPEDVVASERRIAEETAKAEGKPEQALPKIVEGRLNGFFKDAVLLEQPSVSDSKKTVKALLDEAGVTVTRFVRFEVGQA.

The segment at 76-79 (TDFV) is involved in Mg(2+) ion dislocation from EF-Tu.

This sequence belongs to the EF-Ts family.

The protein localises to the cytoplasm. Its function is as follows. Associates with the EF-Tu.GDP complex and induces the exchange of GDP to GTP. It remains bound to the aminoacyl-tRNA.EF-Tu.GTP complex up to the GTP hydrolysis stage on the ribosome. The polypeptide is Elongation factor Ts (Mycolicibacterium paratuberculosis (strain ATCC BAA-968 / K-10) (Mycobacterium paratuberculosis)).